Here is a 498-residue protein sequence, read N- to C-terminus: Guanosine-5'-triphosphate,3'-diphosphate pyrophosphatase (498 aa).

This sequence belongs to the GppA/Ppx family. GppA subfamily.

It carries out the reaction guanosine 3'-diphosphate 5'-triphosphate + H2O = guanosine 3',5'-bis(diphosphate) + phosphate + H(+). The protein operates within purine metabolism; ppGpp biosynthesis; ppGpp from GTP: step 2/2. In terms of biological role, catalyzes the conversion of pppGpp to ppGpp. Guanosine pentaphosphate (pppGpp) is a cytoplasmic signaling molecule which together with ppGpp controls the 'stringent response', an adaptive process that allows bacteria to respond to amino acid starvation, resulting in the coordinated regulation of numerous cellular activities. This Pectobacterium carotovorum subsp. carotovorum (strain PC1) protein is Guanosine-5'-triphosphate,3'-diphosphate pyrophosphatase.